We begin with the raw amino-acid sequence, 393 residues long: Acetylornithine aminotransferase 1 (393 aa).

A N(2)-acetyl-L-ornithine-binding site is contributed by R131. D215–Q218 is a binding site for pyridoxal 5'-phosphate. K244 is subject to N6-(pyridoxal phosphate)lysine. T272 serves as a coordination point for N(2)-acetyl-L-ornithine. T273 contacts pyridoxal 5'-phosphate.

This sequence belongs to the class-III pyridoxal-phosphate-dependent aminotransferase family. ArgD subfamily. As to quaternary structure, homodimer. It depends on pyridoxal 5'-phosphate as a cofactor.

It is found in the cytoplasm. The catalysed reaction is N(2)-acetyl-L-ornithine + 2-oxoglutarate = N-acetyl-L-glutamate 5-semialdehyde + L-glutamate. The protein operates within amino-acid biosynthesis; L-arginine biosynthesis; N(2)-acetyl-L-ornithine from L-glutamate: step 4/4. This is Acetylornithine aminotransferase 1 from Bordetella pertussis (strain Tohama I / ATCC BAA-589 / NCTC 13251).